The primary structure comprises 400 residues: Elongation factor Tu (400 aa).

The 199-residue stretch at lysine 10 to glutamine 208 folds into the tr-type G domain. The interval glycine 19–threonine 26 is G1. Position 19–26 (glycine 19–threonine 26) interacts with GTP. Threonine 26 serves as a coordination point for Mg(2+). A G2 region spans residues glycine 60–asparagine 64. A G3 region spans residues aspartate 81 to glycine 84. GTP contacts are provided by residues aspartate 81–histidine 85 and asparagine 136–aspartate 139. The tract at residues asparagine 136–aspartate 139 is G4. Residues serine 174–leucine 176 are G5.

The protein belongs to the TRAFAC class translation factor GTPase superfamily. Classic translation factor GTPase family. EF-Tu/EF-1A subfamily. In terms of assembly, monomer.

It localises to the cytoplasm. It carries out the reaction GTP + H2O = GDP + phosphate + H(+). Functionally, GTP hydrolase that promotes the GTP-dependent binding of aminoacyl-tRNA to the A-site of ribosomes during protein biosynthesis. In Thermosipho melanesiensis (strain DSM 12029 / CIP 104789 / BI429), this protein is Elongation factor Tu.